We begin with the raw amino-acid sequence, 151 residues long: Large-conductance mechanosensitive channel (151 aa).

The next 3 helical transmembrane spans lie at 14–34 (VVDMAVGIIVGGAFGTIVNTL), 38–58 (VLMPPLGLLIGGVDFTNLYLI), and 86–106 (GLFLNSVISFLIMAFAVFLLV).

This sequence belongs to the MscL family. In terms of assembly, homopentamer.

It localises to the cell inner membrane. Channel that opens in response to stretch forces in the membrane lipid bilayer. May participate in the regulation of osmotic pressure changes within the cell. The sequence is that of Large-conductance mechanosensitive channel from Pelodictyon phaeoclathratiforme (strain DSM 5477 / BU-1).